The following is an 89-amino-acid chain: Large ribosomal subunit protein eL43 (89 aa).

The Zn(2+) site is built by C38, C41, C56, and C59. The segment at 38–59 adopts a C4-type zinc-finger fold; it reads CPSCDRPGVKRESRGIWKCRKC.

It belongs to the eukaryotic ribosomal protein eL43 family. Putative zinc-binding subfamily. Part of the 50S ribosomal subunit. It depends on Zn(2+) as a cofactor.

Functionally, binds to the 23S rRNA. The protein is Large ribosomal subunit protein eL43 of Methanothermobacter thermautotrophicus (strain ATCC 29096 / DSM 1053 / JCM 10044 / NBRC 100330 / Delta H) (Methanobacterium thermoautotrophicum).